Reading from the N-terminus, the 95-residue chain is Large ribosomal subunit protein bL28 (95 aa).

Residues 1–28 (MARKRTLGGKAPQAGNKVSHSQRKTRRQ) are disordered.

The protein belongs to the bacterial ribosomal protein bL28 family.

The protein is Large ribosomal subunit protein bL28 of Magnetococcus marinus (strain ATCC BAA-1437 / JCM 17883 / MC-1).